The primary structure comprises 124 residues: Large ribosomal subunit protein bL19 (124 aa).

This sequence belongs to the bacterial ribosomal protein bL19 family.

Its function is as follows. This protein is located at the 30S-50S ribosomal subunit interface and may play a role in the structure and function of the aminoacyl-tRNA binding site. This Cereibacter sphaeroides (strain ATCC 17029 / ATH 2.4.9) (Rhodobacter sphaeroides) protein is Large ribosomal subunit protein bL19.